We begin with the raw amino-acid sequence, 101 residues long: NAD(P)H-quinone oxidoreductase subunit 4L, chloroplastic (101 aa).

Transmembrane regions (helical) follow at residues 2-22 (IFEHALVLSAFLFSIGIYGLI), 32-52 (MCLELILNAVNINLVTFSDFF), and 61-81 (IFSIFVIAVAAAEAAIGPAIV).

Belongs to the complex I subunit 4L family. As to quaternary structure, NDH is composed of at least 16 different subunits, 5 of which are encoded in the nucleus.

The protein localises to the plastid. The protein resides in the chloroplast thylakoid membrane. It carries out the reaction a plastoquinone + NADH + (n+1) H(+)(in) = a plastoquinol + NAD(+) + n H(+)(out). It catalyses the reaction a plastoquinone + NADPH + (n+1) H(+)(in) = a plastoquinol + NADP(+) + n H(+)(out). NDH shuttles electrons from NAD(P)H:plastoquinone, via FMN and iron-sulfur (Fe-S) centers, to quinones in the photosynthetic chain and possibly in a chloroplast respiratory chain. The immediate electron acceptor for the enzyme in this species is believed to be plastoquinone. Couples the redox reaction to proton translocation, and thus conserves the redox energy in a proton gradient. The sequence is that of NAD(P)H-quinone oxidoreductase subunit 4L, chloroplastic from Phaseolus vulgaris (Kidney bean).